The primary structure comprises 115 residues: MMMLMTSITISFLLPMIVMLLATTLSKKSINDREKSSPFECGFDPKLNMPFSIQFFLIAVIFLIFDVEIALILPIVIIMKTSNIMVWTLSTMLFIIILLVGLYYEWNQGALKWAN.

3 helical membrane passes run 1 to 21 (MMMLMTSITISFLLPMIVMLL), 58 to 78 (IAVIFLIFDVEIALILPIVII), and 84 to 104 (IMVWTLSTMLFIIILLVGLYY).

It belongs to the complex I subunit 3 family.

The protein resides in the mitochondrion membrane. The enzyme catalyses a ubiquinone + NADH + 5 H(+)(in) = a ubiquinol + NAD(+) + 4 H(+)(out). In terms of biological role, core subunit of the mitochondrial membrane respiratory chain NADH dehydrogenase (Complex I) that is believed to belong to the minimal assembly required for catalysis. Complex I functions in the transfer of electrons from NADH to the respiratory chain. The immediate electron acceptor for the enzyme is believed to be ubiquinone. This chain is NADH-ubiquinone oxidoreductase chain 3 (ND3), found in Locusta migratoria (Migratory locust).